The sequence spans 529 residues: Pre-rRNA-processing protein pro-1 (529 aa).

WD repeat units lie at residues 136 to 175 and 287 to 326; these read AHYQ…SADR and GHSD…CLKV. Residues 416–518 are a coiled coil; the sequence is ARNEAAKAEK…LKEINKQMYE (103 aa). Residues 436-470 are disordered; it reads TLGDDEDDAPEVGNQRRKSGKKNKKNRKNQKKNDF. The span at 450-465 shows a compositional bias: basic residues; sequence QRRKSGKKNKKNRKNQ.

It belongs to the WD repeat IPI3/WDR18 family. In terms of assembly, component of the PELP1 complex, composed of at least PELP1, TEX10 and WDR18. The complex interacts with pre-60S ribosome particles.

It is found in the nucleus. The protein localises to the nucleolus. Its subcellular location is the nucleoplasm. Its function is as follows. Component of the PELP1 complex involved in the nucleolar steps of 28S rRNA maturation and the subsequent nucleoplasmic transit of the pre-60S ribosomal subunit. Required for processing ITS2 sequences from rRNA intermediates during 26S rRNA maturation. Required in the soma to promote normal proliferation and prevent germline tumor formation. The chain is Pre-rRNA-processing protein pro-1 from Caenorhabditis elegans.